Reading from the N-terminus, the 65-residue chain is Prokaryotic ubiquitin-like protein UBact (65 aa).

Positions 1 to 17 are enriched in polar residues; that stretch reads MEVNMPTTEQGQKNKQM. Positions 1–65 are disordered; sequence MEVNMPTTEQ…ARRYRQRTGE (65 aa). Residues 35-65 show a composition bias toward basic and acidic residues; the sequence is KVEKPNTEEILKRMRKVDPDQARRYRQRTGE. Glu65 participates in a covalent cross-link: Isoglutamyl lysine isopeptide (Glu-Lys) (interchain with K-? in acceptor proteins).

The protein belongs to the ubiquitin-like protein UBact family.

May function as a protein modifier covalently attached to lysine residues of substrate proteins. This may serve to target the modified proteins for degradation by proteasomes. This is Prokaryotic ubiquitin-like protein UBact from Methylacidiphilum infernorum (isolate V4) (Methylokorus infernorum (strain V4)).